We begin with the raw amino-acid sequence, 70 residues long: VRDAYIAQNYNCVYHCGRDAYCNELCSKNGAKSRTRGGYCHWFGPHGDACWCIDLPNNVPIKVEGKCHRK.

Positions 2-68 (RDAYIAQNYN…VPIKVEGKCH (67 aa)) constitute an LCN-type CS-alpha/beta domain. 4 cysteine pairs are disulfide-bonded: Cys-12–Cys-67, Cys-16–Cys-40, Cys-22–Cys-50, and Cys-26–Cys-52.

Belongs to the long (4 C-C) scorpion toxin superfamily. Sodium channel inhibitor family. Alpha subfamily. As to expression, expressed by the venom gland.

Its subcellular location is the secreted. In terms of biological role, alpha toxins bind voltage-independently at site-3 of sodium channels (Nav) and inhibit the inactivation of the activated channels, thereby blocking neuronal transmission. In Buthus occitanus mardochei (Moroccan scorpion), this protein is Toxin Boma6d.